A 145-amino-acid polypeptide reads, in one-letter code: UPF0310 protein PH1033 (145 aa).

Belongs to the UPF0310 family.

This Pyrococcus horikoshii (strain ATCC 700860 / DSM 12428 / JCM 9974 / NBRC 100139 / OT-3) protein is UPF0310 protein PH1033.